The sequence spans 360 residues: MKDSIINKLESLSERHEELQALLGDPSVINDQDKFRAYSKEYSQLEEVVTTFNRWKKLNSDIEEAQILLDDPDMKEMAAEEIAENKAEIENLEQHLQILLLPKDPNDEYNAFLEIRAGTGGDEAGIFAGDLYRMYSRYCESKRWRIEEMSANESEQGGYKEIIVKISGEGVYGQLKFESGGHRVQRVPKTESQGRIHTSACTVAVMPELPESEMPEINPTDLRIDTYRSSGAGGQHVNTTDSAVRITHIPTGIVVECQDERSQHKNKAKALAVLASRIVQVEQERQAAEQADTRRNLLGSGDRSDKIRTYNYPQGRVTDHRINLTVYRLDEVMNGKIDELIQPIITEYQADQLAALSEQA.

Q235 carries the N5-methylglutamine modification. Residues 285-295 (RQAAEQADTRR) are compositionally biased toward basic and acidic residues. Residues 285–309 (RQAAEQADTRRNLLGSGDRSDKIRT) are disordered.

The protein belongs to the prokaryotic/mitochondrial release factor family. Methylated by PrmC. Methylation increases the termination efficiency of RF1.

Its subcellular location is the cytoplasm. Peptide chain release factor 1 directs the termination of translation in response to the peptide chain termination codons UAG and UAA. The chain is Peptide chain release factor 1 from Actinobacillus pleuropneumoniae serotype 7 (strain AP76).